The chain runs to 419 residues: Farnesyl pyrophosphate synthase (419 aa).

Met-1 carries the post-translational modification N-acetylmethionine. Residues Lys-123, Arg-126, and Gln-162 each contribute to the isopentenyl diphosphate site. An N6-(2-hydroxyisobutyryl)lysine; alternate modification is found at Lys-123. Lys-123 carries the N6-acetyllysine; alternate modification. Residues Asp-169 and Asp-173 each coordinate Mg(2+). Arg-178 lines the dimethylallyl diphosphate pocket. Arg-179 is an isopentenyl diphosphate binding site. Residues Lys-266, Thr-267, Gln-306, Lys-323, and Lys-332 each coordinate dimethylallyl diphosphate. The residue at position 353 (Lys-353) is an N6-acetyllysine.

Belongs to the FPP/GGPP synthase family. Homodimer. Interacts with RSAD2. As to quaternary structure, (Microbial infection) Interacts with HTLV-1 protein p13(II). The cofactor is Mg(2+).

The protein localises to the cytoplasm. The enzyme catalyses isopentenyl diphosphate + dimethylallyl diphosphate = (2E)-geranyl diphosphate + diphosphate. It catalyses the reaction isopentenyl diphosphate + (2E)-geranyl diphosphate = (2E,6E)-farnesyl diphosphate + diphosphate. The protein operates within isoprenoid biosynthesis; farnesyl diphosphate biosynthesis; farnesyl diphosphate from geranyl diphosphate and isopentenyl diphosphate: step 1/1. It participates in isoprenoid biosynthesis; geranyl diphosphate biosynthesis; geranyl diphosphate from dimethylallyl diphosphate and isopentenyl diphosphate: step 1/1. Inactivated by interferon-induced RSAD2. This inactivation may result of disruption of lipid rafts at the plasma membrane, and thus have an antiviral effect since many enveloped viruses need lipid rafts to bud efficiently out of the cell. Functionally, key enzyme in isoprenoid biosynthesis which catalyzes the formation of farnesyl diphosphate (FPP), a precursor for several classes of essential metabolites including sterols, dolichols, carotenoids, and ubiquinones. FPP also serves as substrate for protein farnesylation and geranylgeranylation. Catalyzes the sequential condensation of isopentenyl pyrophosphate with the allylic pyrophosphates, dimethylallyl pyrophosphate, and then with the resultant geranylpyrophosphate to the ultimate product farnesyl pyrophosphate. The polypeptide is Farnesyl pyrophosphate synthase (Homo sapiens (Human)).